The following is a 228-amino-acid chain: MMRVSYHGHSVVKIETNGKVILIDPFLTGNPKTDLKAEDVKVDAIILSHGHGDHVGDTVALAKNNNAVVVAPFELATFLGWQGVNTHPMHIGGSHEFDFGKVKFTQAFHGSSYIDEENKTITYTGMPAGILFTAEEKTVYHAGDTALFSDMKLIGELNNIDVAFLPIGDNFTMGPEDAVLAAKWIEAKTVVPMHYNTFPVIEQDPYQFVEKLQNCTGKVLEAGESITL.

The protein belongs to the UPF0173 family.

This Bacillus mycoides (strain KBAB4) (Bacillus weihenstephanensis) protein is UPF0173 metal-dependent hydrolase BcerKBAB4_4442.